Consider the following 173-residue polypeptide: Photosystem I assembly protein Ycf3 (173 aa).

TPR repeat units follow at residues 35–68 (AYLY…EDNQ), 72–105 (GETL…NPKQ), and 120–153 (GRMA…YPGG).

The protein belongs to the Ycf3 family.

It is found in the cellular thylakoid membrane. Its function is as follows. Essential for the assembly of the photosystem I (PSI) complex. May act as a chaperone-like factor to guide the assembly of the PSI subunits. This is Photosystem I assembly protein Ycf3 from Prochlorococcus marinus (strain NATL2A).